An 84-amino-acid chain; its full sequence is Succinate dehydrogenase membrane anchor subunit (84 aa).

The Mitochondrial matrix portion of the chain corresponds to Met-1–Thr-3. A helical membrane pass occupies residues Phe-4–Ile-24. Topologically, residues Glu-25–Leu-31 are mitochondrial intermembrane. The helical transmembrane segment at Ser-32 to Phe-52 threads the bilayer. His-37 provides a ligand contact to heme. Tyr-49 is a binding site for a ubiquinone. Topologically, residues Gln-53–Met-58 are mitochondrial matrix. Residues Leu-59–Ile-81 traverse the membrane as a helical segment. The Mitochondrial intermembrane segment spans residues Lys-82–Thr-84.

In terms of assembly, part of an enzyme complex containing four subunits: a flavoprotein, an iron-sulfur protein, plus two membrane-anchoring proteins. It depends on heme as a cofactor.

The protein localises to the mitochondrion inner membrane. The protein operates within carbohydrate metabolism; tricarboxylic acid cycle. Functionally, membrane-anchoring subunit of succinate dehydrogenase (SDH). In Chondrus crispus (Carrageen Irish moss), this protein is Succinate dehydrogenase membrane anchor subunit (SDH4).